A 1141-amino-acid polypeptide reads, in one-letter code: PR domain zinc finger protein 15 (1141 aa).

The SET domain occupies P49 to A159. Residues W197–H219 form a C2H2-type 1 zinc finger. Residues K224–I283 form a disordered region. Residues A236–R245 are compositionally biased toward basic and acidic residues. The span at Q262 to V274 shows a compositional bias: basic residues. C2H2-type zinc fingers lie at residues Y372 to H394, F399 to H422, F460 to H482, and F487 to H509. K517 participates in a covalent cross-link: Glycyl lysine isopeptide (Lys-Gly) (interchain with G-Cter in SUMO2). 2 C2H2-type zinc fingers span residues S536–H558 and Y563–H585. The segment at I604–P623 is disordered. Acidic residues predominate over residues E609–D620. 9 C2H2-type zinc fingers span residues Y626–H649, Y654–H676, H690–H712, H718–H740, Y746–H768, Y774–H796, F802–H824, W830–H853, and Q859–H882. Disordered regions lie at residues A922–N973 and Q1108–Y1141. Positions G927–Q938 are enriched in basic residues. The segment covering P1121–Y1141 has biased composition (low complexity).

It belongs to the class V-like SAM-binding methyltransferase superfamily. As to expression, detected in all tissues examined.

It localises to the nucleus. Functionally, sequence-specific DNA-binding transcriptional regulator. Plays a role as a molecular node in a transcriptional network regulating embryonic development and cell fate decision. Stimulates the expression of upstream key transcriptional activators and repressors of the Wnt/beta-catenin and MAPK/ERK pathways, respectively, that are essential for naive pluripotency and self-renewal maintenance of embryonic stem cells (ESCs). Specifically promotes SPRY1 and RSPO1 transcription activation through recognition and direct binding of a specific DNA sequence in their promoter regions. Involved in early embryo development. Also plays a role in induced pluripotent stem cells (iPSCs) reprogramming. The chain is PR domain zinc finger protein 15 from Homo sapiens (Human).